The primary structure comprises 280 residues: uncharacterized protein (280 aa).

Residues 26-127 form the KilA-N domain; sequence YFMSMKLLDV…TRVSILMRYY (102 aa).

This is an uncharacterized protein from Vertebrata (FPV).